Consider the following 276-residue polypeptide: Undecaprenyl-diphosphatase (276 aa).

Transmembrane regions (helical) follow at residues 2-22 (LEILKAVILGIVEGITEFLPI), 43-63 (FIDMFNVVIQLGAIMAVVVLY), 83-103 (WTLWKKVIIAVIPSVIIGLPL), 111-131 (LMNWLVVSIALIVYGVLFIVI), 147-167 (TLPYKVAILIGCFQILSLIPG), 186-206 (YVAAEFSFFLAIPTMFGASLL), 224-244 (LILAVGVIVSFVVAYASIRFL), and 255-275 (AFGWYRIILGVIVIAYFALLA).

It belongs to the UppP family.

It is found in the cell membrane. The enzyme catalyses di-trans,octa-cis-undecaprenyl diphosphate + H2O = di-trans,octa-cis-undecaprenyl phosphate + phosphate + H(+). Its function is as follows. Catalyzes the dephosphorylation of undecaprenyl diphosphate (UPP). Confers resistance to bacitracin. In Limosilactobacillus fermentum (strain NBRC 3956 / LMG 18251) (Lactobacillus fermentum), this protein is Undecaprenyl-diphosphatase.